The primary structure comprises 880 residues: GATOR2 complex protein MIOS-A (880 aa).

6 WD repeats span residues 60–102 (SDTP…NSKC), 113–157 (KHAR…TPEV), 185–224 (GQNDACLSLCWLPRDQKLLLAGMHRNLAIFDLRNTNQKMF), 226–264 (NTKAVQGVTVDPHFHDRVASFFEGQVAIWDLRKFEKPVL), 268–309 (EQPK…TPIG), and 399–441 (RLRA…KQYA). A C4-type zinc finger spans residues 740-786 (VSCNFCGKSISYSCSSVPHQGRGFSQYGVSGSPTKSKFTSCPGCRKP). Positions 742, 745, 780, 783, 793, 832, 835, 837, 840, 843, 854, 859, and 863 each coordinate Zn(2+). The RING-type; atypical zinc finger occupies 787-868 (LPRCALCLIN…CSCKCMQLDT (82 aa)).

Belongs to the WD repeat mio family. As to quaternary structure, component of the GATOR2 subcomplex, composed of MIOS, SEC13, SEH1L, WDR24 and WDR59. The GATOR2 complex interacts with CASTOR1 and CASTOR2; the interaction is negatively regulated by arginine. The GATOR2 complex interacts with SESN1, SESN2 and SESN3; the interaction is negatively regulated by amino acids. Interacts with SAR1; the interaction is direct, disrupted by leucine and mediates the interaction of SAR1 with the GATOR2 complex to negatively regulate the TORC1 signaling upon leucine deprivation.

It is found in the lysosome membrane. With respect to regulation, the GATOR2 complex is negatively regulated by the upstream amino acid sensors CASTOR1 and SESN2, which sequester the GATOR2 complex in absence of amino acids. In the presence of abundant amino acids, GATOR2 is released from CASTOR1 and SESN2 and activated. In terms of biological role, as a component of the GATOR2 complex, functions as an activator of the amino acid-sensing branch of the mTORC1 signaling pathway. The GATOR2 complex indirectly activates mTORC1 through the inhibition of the GATOR1 subcomplex. GATOR2 probably acts as an E3 ubiquitin-protein ligase toward GATOR1. In the presence of abundant amino acids, the GATOR2 complex mediates ubiquitination of the NPRL2 core component of the GATOR1 complex, leading to GATOR1 inactivation. In the absence of amino acids, GATOR2 is inhibited, activating the GATOR1 complex. Within the GATOR2 complex, MIOS is required to prevent autoubiquitination of WDR24, the catalytic subunit of the complex. This is GATOR2 complex protein MIOS-A from Xenopus laevis (African clawed frog).